Consider the following 127-residue polypeptide: MIPAPLDASLLREHAFQGTNDLSTVLSPSTFTDEGGYKPVLKYGLGYFNYGLVIDDEVYDYSVCDIIRGHVYDHFWCYFCCFMILFTIWLISLNWCPSSKKSKFDWSKKKDDFKMEGGDLEYQHVKI.

This is an uncharacterized protein from Saccharomyces cerevisiae (strain ATCC 204508 / S288c) (Baker's yeast).